Reading from the N-terminus, the 75-residue chain is uncharacterized protein (75 aa).

A helical membrane pass occupies residues 7–26; that stretch reads ATAPLFVIVGLAVVLTGATG.

It is found in the membrane. This is an uncharacterized protein from Dictyostelium discoideum (Social amoeba).